We begin with the raw amino-acid sequence, 232 residues long: MGSVLSTDSGKSAPASATARALERRRDPELPVTSFDCAVCLEVLHQPVRTRCGHVFCRSCIATSLKNNKWTCPYCRAYLPSEGVPATDVAKRMKSEYKNCAECDTLVCLSEMRAHIRTCQKYIDKYGPLQELEETAARCVCPFCQRELYEDSLLDHCITHHRSERRPVFCPLCRLIPDENPSSFSGSLIRHLQVSHTLFYDDFIDFNIIEEALIRRVLDRSLLEYVNHSNTT.

The segment covering 1–10 has biased composition (polar residues); that stretch reads MGSVLSTDSG. The interval 1 to 23 is disordered; that stretch reads MGSVLSTDSGKSAPASATARALE. Gly-2 is lipidated: N-myristoyl glycine. Residues Cys-37 and Cys-40 each coordinate Zn(2+). The segment at 37-76 adopts an RING-type zinc-finger fold; it reads CAVCLEVLHQPVRTRCGHVFCRSCIATSLKNNKWTCPYCR. An interaction with the C2HC RNF-type zinc finger region spans residues 43 to 45; that stretch reads VLH. Residues Cys-52, His-54, Cys-57, Cys-60, Cys-72, Cys-75, Cys-100, and Cys-103 each coordinate Zn(2+). The C2HC RNF-type zinc-finger motif lies at 100–119; it reads CAECDTLVCLSEMRAHIRTC. Positions 109–113 are interaction with the RING-type zinc finger; that stretch reads LSEMR. His-115 and Cys-119 together coordinate Zn(2+). A linker region region spans residues 120–128; that stretch reads QKYIDKYGP. The required for interaction with ubiquitin and for autoubiquitination stretch occupies residues 210 to 224; the sequence is EEALIRRVLDRSLLE.

In terms of assembly, interacts with UBE2D1. Interacts with VCP/p97; leading to recruit RNF125 to RIGI and promote ubiquitination of RIGI. Post-translationally, autoubiquitinated, leading to its subsequent proteasomal degradation. As to expression, predominantly expressed in lymphoid tissues, including bone marrow, spleen and thymus. Also weakly expressed in other tissues. Predominant in the CD4(+) and CD8(+) T-cells, suggesting that it is preferentially confined to T-cells.

Its subcellular location is the golgi apparatus membrane. The enzyme catalyses S-ubiquitinyl-[E2 ubiquitin-conjugating enzyme]-L-cysteine + [acceptor protein]-L-lysine = [E2 ubiquitin-conjugating enzyme]-L-cysteine + N(6)-ubiquitinyl-[acceptor protein]-L-lysine.. The protein operates within protein modification; protein ubiquitination. In terms of biological role, E3 ubiquitin-protein ligase that mediates ubiquitination and subsequent proteasomal degradation of target proteins, such as RIGI, MAVS/IPS1, IFIH1/MDA5, JAK1 and p53/TP53. Acts as a negative regulator of type I interferon production by mediating ubiquitination of RIGI at 'Lys-181', leading to RIGI degradation. Mediates ubiquitination and subsequent degradation of p53/TP53. Mediates ubiquitination and subsequent degradation of JAK1. Acts as a positive regulator of T-cell activation. The protein is E3 ubiquitin-protein ligase RNF125 of Homo sapiens (Human).